The sequence spans 449 residues: GTP-binding protein A (449 aa).

A disordered region spans residues 1–77 (MFNINPYKSK…LSSKTENSLS (77 aa)). 2 stretches are compositionally biased toward low complexity: residues 8–46 (KSKTTKSSSSSSASPKSSKISNVSGSGSSSSSSSSSSSS) and 67–77 (SLSSKTENSLS). Positions 149 to 386 (QNECNVLLLG…FMGHLRAKNK (238 aa)) constitute an AIG1-type G domain. The segment at 158–165 (GRTGVGKS) is G1. Residue 158–165 (GRTGVGKS) participates in GTP binding. The segment at 183–187 (SCTQD) is G2. Residues 204–207 (DTPG) are G3. The G4 stretch occupies residues 275-278 (TYAN). Residues 336–338 (ENS) form a G5 region.

It belongs to the TRAFAC class TrmE-Era-EngA-EngB-Septin-like GTPase superfamily. AIG1/Toc34/Toc159-like paraseptin GTPase family. IAN subfamily.

In Dictyostelium discoideum (Social amoeba), this protein is GTP-binding protein A (gtpA).